A 134-amino-acid chain; its full sequence is Ribonuclease VapC (134 aa).

The PINc domain occupies I4–E124. D6 is a binding site for Mg(2+).

The protein belongs to the PINc/VapC protein family. Requires Mg(2+) as cofactor.

Functionally, toxic component of a type II toxin-antitoxin (TA) system. Has ssRNase activity. Its RNase activity is partially neutralized by cognate antitoxin VapB. Rapidly induces apoptosis upon microinjection into mouse fibroblasts (L929 line). Probably contributes to host cell death if bacterial cell lysis occurs during host infection. This chain is Ribonuclease VapC, found in Rickettsia bellii (strain RML369-C).